The primary structure comprises 163 residues: Cyclic pyranopterin monophosphate synthase (163 aa).

Substrate is bound by residues 75-77 (MCH) and 115-116 (ME). Asp130 is a catalytic residue.

Belongs to the MoaC family. Homohexamer; trimer of dimers.

The enzyme catalyses (8S)-3',8-cyclo-7,8-dihydroguanosine 5'-triphosphate = cyclic pyranopterin phosphate + diphosphate. It functions in the pathway cofactor biosynthesis; molybdopterin biosynthesis. Its function is as follows. Catalyzes the conversion of (8S)-3',8-cyclo-7,8-dihydroguanosine 5'-triphosphate to cyclic pyranopterin monophosphate (cPMP). The protein is Cyclic pyranopterin monophosphate synthase of Bacillus pumilus (strain SAFR-032).